Reading from the N-terminus, the 101-residue chain is Small ribosomal subunit protein uS14 (101 aa).

Positions 1–11 (MAKKSAIETNE) are enriched in basic and acidic residues. The segment at 1 to 24 (MAKKSAIETNERRRKLSQSKAAKR) is disordered. Basic residues predominate over residues 12 to 24 (RRRKLSQSKAAKR).

The protein belongs to the universal ribosomal protein uS14 family. As to quaternary structure, part of the 30S ribosomal subunit. Contacts proteins S3 and S10.

In terms of biological role, binds 16S rRNA, required for the assembly of 30S particles and may also be responsible for determining the conformation of the 16S rRNA at the A site. The chain is Small ribosomal subunit protein uS14 from Azorhizobium caulinodans (strain ATCC 43989 / DSM 5975 / JCM 20966 / LMG 6465 / NBRC 14845 / NCIMB 13405 / ORS 571).